Consider the following 367-residue polypeptide: Quinolinate synthase (367 aa).

Iminosuccinate is bound by residues H45 and S62. Residue C109 coordinates [4Fe-4S] cluster. Residues 140 to 142 (YVN) and S161 each bind iminosuccinate. A [4Fe-4S] cluster-binding site is contributed by C229. Iminosuccinate contacts are provided by residues 255 to 257 (HPE) and T272. C319 serves as a coordination point for [4Fe-4S] cluster.

It belongs to the quinolinate synthase family. Type 3 subfamily. The cofactor is [4Fe-4S] cluster.

The protein localises to the cytoplasm. The catalysed reaction is iminosuccinate + dihydroxyacetone phosphate = quinolinate + phosphate + 2 H2O + H(+). The protein operates within cofactor biosynthesis; NAD(+) biosynthesis; quinolinate from iminoaspartate: step 1/1. In terms of biological role, catalyzes the condensation of iminoaspartate with dihydroxyacetone phosphate to form quinolinate. This Lysinibacillus sphaericus (strain C3-41) protein is Quinolinate synthase.